The sequence spans 416 residues: MESRKDMVMFLDGGQLGTLVGKRVSNLSEAVSSPLPEPPEKMVPHGCLSPRAGPPTSRERGGGGQEEEPVDGLAGSAAGLGAEPRSAGAAMLGPGPPVPSADSLSGQGQPSSSDTESDFYEEIEVSCTPDCATGNAEYQHSKAPGSDALGSSPTSGSEAPKSNGGSGGSGSQGTLACSASDQMRRYRTAFTREQIARLEKEFYRENYVSRPRRCELAAALNLPETTIKVWFQNRRMKDKRQRLAMTWPHPADPAFYTYMMSHAAAAGGLPYPFPSHLPLPYYSPVGLGAASAASAAASPFSGPLRPLDTFRVLSQPYPRPELLCAFRHPPLYPGPAHGLGASAAAAAAAGPCSCLACHSGPANGLAPRAAAAAAASDFTCASTSRSDSFLTFAPSVLSKASSVAALDQREEVPLTR.

Disordered regions lie at residues 30–120 (AVSS…SDFY) and 138–178 (YQHS…LACS). Residues 72-82 (GLAGSAAGLGA) show a composition bias toward low complexity. Positions 102–114 (DSLSGQGQPSSSD) are enriched in polar residues. The segment at residues 183-242 (MRRYRTAFTREQIARLEKEFYRENYVSRPRRCELAAALNLPETTIKVWFQNRRMKDKRQR) is a DNA-binding region (homeobox).

The protein belongs to the even-skipped homeobox family.

Its subcellular location is the nucleus. Functionally, may play a role in the specification of neuronal cell types. May play a role in the dorsoventral specification of mesodermal cell fate. The chain is Homeobox even-skipped homolog protein 1 (Evx1) from Mus musculus (Mouse).